Here is a 119-residue protein sequence, read N- to C-terminus: Large ribosomal subunit protein bL20 (119 aa).

This sequence belongs to the bacterial ribosomal protein bL20 family.

Binds directly to 23S ribosomal RNA and is necessary for the in vitro assembly process of the 50S ribosomal subunit. It is not involved in the protein synthesizing functions of that subunit. The chain is Large ribosomal subunit protein bL20 from Alkalilimnicola ehrlichii (strain ATCC BAA-1101 / DSM 17681 / MLHE-1).